Reading from the N-terminus, the 244-residue chain is Cell division protein ZapD (244 aa).

Belongs to the ZapD family. Interacts with FtsZ.

The protein resides in the cytoplasm. Cell division factor that enhances FtsZ-ring assembly. Directly interacts with FtsZ and promotes bundling of FtsZ protofilaments, with a reduction in FtsZ GTPase activity. This Shewanella sp. (strain MR-4) protein is Cell division protein ZapD.